A 592-amino-acid polypeptide reads, in one-letter code: Autophagy-related protein 22-1 (592 aa).

Transmembrane regions (helical) follow at residues 31–51, 108–128, 143–163, and 167–187; these read YGWA…PITL, TASF…VIII, LLIV…VVVP, and LLGG…FVLL. An N-linked (GlcNAc...) asparagine glycan is attached at Asn-213. 8 helical membrane passes run 271–291, 301–321, 364–384, 398–418, 433–453, 468–490, 502–524, and 534–554; these read IGIG…VVVV, LVLF…SLWL, IVIF…VSGT, AALG…AFSW, IIAC…GFIP, MYPL…RSFF, FYAL…VGAI, and AFVF…LVDV. Residues 572-592 are disordered; it reads PQGSEYGAISDDQTTEDPIEE.

The protein belongs to the ATG22 family.

The protein localises to the vacuole membrane. Vacuolar effluxer which mediate the efflux of amino acids resulting from autophagic degradation. The release of autophagic amino acids allows the maintenance of protein synthesis and viability during nitrogen starvation. The chain is Autophagy-related protein 22-1 (atg22-1) from Penicillium rubens (strain ATCC 28089 / DSM 1075 / NRRL 1951 / Wisconsin 54-1255) (Penicillium chrysogenum).